A 201-amino-acid polypeptide reads, in one-letter code: UPF0301 protein Bpet0561 (201 aa).

It belongs to the UPF0301 (AlgH) family.

The polypeptide is UPF0301 protein Bpet0561 (Bordetella petrii (strain ATCC BAA-461 / DSM 12804 / CCUG 43448)).